We begin with the raw amino-acid sequence, 322 residues long: 3-hydroxyacyl-CoA dehydrogenase FVEG_12628 (322 aa).

The helical transmembrane segment at 5–25 (IRTVAIVGCGVIGMGWAVLFL) threads the bilayer. Glu151 functions as the For hydroxyacyl-coenzyme A dehydrogenase activity in the catalytic mechanism.

Belongs to the 3-hydroxyacyl-CoA dehydrogenase family.

The protein localises to the membrane. 3-hydroxyacyl-CoA dehydrogenase; part of the Fusarium detoxification of benzoxazolinone cluster 2 (FDB2) involved in the degradation of benzoxazolinones produced by the host plant. Maize, wheat, and rye produce the 2 benzoxazinone phytoanticipins 2,4-dihy-droxy-7-methoxy-1,4-benzoxazin-3-one (DIMBOA) and 2,4-dihydroxy-1,4-benzoxazin-3-one (DIBOA) that, due to their inherent instability once released, spontaneously degrade to the more stable corresponding benzoxazolinones, 6-methoxy-2-benzoxazolinone (MBOA) and 2-benzoxazolinone (BOA), respectively. The first step in the detoxification of benzoxazolinones involves the hydrolysis of the cyclic ester bond of benzoxazolinones by the FDB1 cluster gamma-lactamase MBL1 to aminophenols. MBL1 is able to convert BOA into 2-aminophenol (2-AP), as well as MBOA into 5-methoxy-2-aminophenol (2-AMP). The FDB2 cluster N-malonyltransferase FDB2/NAT1 then metabolizes aminophenols via N-malonylation to non-toxic malonamic acids. FDB2/NAT1 converts 2-AP into N-(2-hydroxyphenyl) malonamic acid (HPMA) and 2-AMP into N-(2-hydroxy-4-methoxyphenyl) malonamic acid (HMPMA). The duplicated dienlactone hydrolases DLH1 and DLH2 may provide redundant function for hydrolyzing the lactone moiety in the BOA molecule. The roles of the amidases an other enzymes encoded by the 2 FDB clusters have not been identified so far. The polypeptide is 3-hydroxyacyl-CoA dehydrogenase FVEG_12628 (Gibberella moniliformis (strain M3125 / FGSC 7600) (Maize ear and stalk rot fungus)).